Consider the following 503-residue polypeptide: Aromatase (503 aa).

3 consecutive transmembrane segments (helical) span residues 19 to 39 (EVVP…LLVW), 53 to 73 (FLGI…IGSA), and 303 to 323 (MLIA…FLIA). The substrate site is built by Asp-309 and Met-374. Position 437 (Cys-437) interacts with heme.

The protein belongs to the cytochrome P450 family. Heme serves as cofactor.

The protein resides in the endoplasmic reticulum membrane. The protein localises to the microsome membrane. It carries out the reaction testosterone + 3 reduced [NADPH--hemoprotein reductase] + 3 O2 = 17beta-estradiol + formate + 3 oxidized [NADPH--hemoprotein reductase] + 4 H2O + 4 H(+). The catalysed reaction is androst-4-ene-3,17-dione + 3 reduced [NADPH--hemoprotein reductase] + 3 O2 = estrone + formate + 3 oxidized [NADPH--hemoprotein reductase] + 4 H2O + 4 H(+). The enzyme catalyses androst-4-ene-3,17-dione + reduced [NADPH--hemoprotein reductase] + O2 = 19-hydroxyandrost-4-ene-3,17-dione + oxidized [NADPH--hemoprotein reductase] + H2O + H(+). It catalyses the reaction 19-hydroxyandrost-4-ene-3,17-dione + reduced [NADPH--hemoprotein reductase] + O2 = 19-oxo-androst-4-ene-3,17-dione + oxidized [NADPH--hemoprotein reductase] + 2 H2O + H(+). It carries out the reaction 19-oxo-androst-4-ene-3,17-dione + reduced [NADPH--hemoprotein reductase] + O2 = estrone + formate + oxidized [NADPH--hemoprotein reductase] + H2O + 2 H(+). The catalysed reaction is estrone + reduced [NADPH--hemoprotein reductase] + O2 = 2-hydroxyestrone + oxidized [NADPH--hemoprotein reductase] + H2O + H(+). The enzyme catalyses 17beta-hydroxy-5alpha-androstan-3-one + reduced [NADPH--hemoprotein reductase] + O2 = 17beta,19-dihydroxy-3-oxo-5alpha-androstanone + oxidized [NADPH--hemoprotein reductase] + H2O + H(+). It catalyses the reaction 17beta,19-dihydroxy-3-oxo-5alpha-androstanone + reduced [NADPH--hemoprotein reductase] + O2 = 17beta-hydroxy-3,19-dioxo-5alpha-androstanone + oxidized [NADPH--hemoprotein reductase] + 2 H2O + H(+). It carries out the reaction 17beta-hydroxy-3,19-dioxo-5alpha-androstanone + reduced [NADPH--hemoprotein reductase] + O2 = 17beta-hydroxy-3-oxo-19-nor-5alpha-androst-1-ene + formate + oxidized [NADPH--hemoprotein reductase] + H2O + 2 H(+). It functions in the pathway steroid hormone biosynthesis. In terms of biological role, a cytochrome P450 monooxygenase that catalyzes the conversion of C19 androgens, androst-4-ene-3,17-dione (androstenedione) and testosterone to the C18 estrogens, estrone and estradiol, respectively. Catalyzes three successive oxidations of C19 androgens: two conventional oxidations at C19 yielding 19-hydroxy and 19-oxo/19-aldehyde derivatives, followed by a third oxidative aromatization step that involves C1-beta hydrogen abstraction combined with cleavage of the C10-C19 bond to yield a phenolic A ring and formic acid. Alternatively, the third oxidative reaction yields a 19-norsteroid and formic acid. Converts dihydrotestosterone to delta1,10-dehydro 19-nordihydrotestosterone and may play a role in homeostasis of this potent androgen. Also displays 2-hydroxylase activity toward estrone. Mechanistically, uses molecular oxygen inserting one oxygen atom into a substrate, and reducing the second into a water molecule, with two electrons provided by NADPH via cytochrome P450 reductase (CPR; NADPH-ferrihemoprotein reductase). The chain is Aromatase (CYP19A1) from Capra hircus (Goat).